A 432-amino-acid polypeptide reads, in one-letter code: Acyl-CoA dehydrogenase AFT10-1 (432 aa).

It belongs to the acyl-CoA dehydrogenase family. FAD serves as cofactor.

It participates in mycotoxin biosynthesis. Functionally, acyl-CoA dehydrogenase; part of the gene clusters that mediate the biosynthesis of the host-selective toxins (HSTs) AF-toxins responsible for Alternaria black spot of strawberry disease by the strawberry pathotype. AF-toxin I and III are valine derivatives of 2,3-dyhydroxy-isovaleric acid and 2-hydroxy-isovaleric acid respectively, while AF II is an isoleucine derivative of 2-hydroxy-valeric acid. These derivatives are bound to a 9,10-epoxy-8-hydroxy-9-methyl-decatrienoic acid (EDA) moiety. On cellular level, AF-toxins affect plasma membrane of susceptible cells and cause a sudden increase in loss of K(+) after a few minutes of toxin treatment. The aldo-keto reductase AFTS1 catalyzes the conversion of 2-keto-isovaleric acid (2-KIV) to 2-hydroxy-isovaleric acid (2-HIV) by reduction of its ketone to an alcohol. The acyl-CoA ligase AFT1, the hydrolase AFT2 and the enoyl-CoA hydratases AFT3 and AFT6, but also the polyketide synthase AFT9, the acyl-CoA dehydrogenase AFT10, the cytochrome P450 monooxygenase AFT11 and the oxidoreductase AFT12 are all involved in the biosynthesis of the AK-, AF- and ACT-toxin common EDA structural moiety. The exact function of each enzyme, and of additional enzymes identified within the AF-toxin clusters have still to be determined. This is Acyl-CoA dehydrogenase AFT10-1 from Alternaria alternata (Alternaria rot fungus).